A 113-amino-acid chain; its full sequence is Cholecystoxin (113 aa).

An N-terminal signal peptide occupies residues 1–20 (MYGGICLCVLLAVLAISSSG). A propeptide spanning residues 21–79 (QHISRSLNGNSLAAAIEQNFPEKHRPARTPDSNQRVESNIDEKANLGVLLARYLQKARR) is cleaved from the precursor. A disordered region spans residues 77–97 (ARRGTNGKPPDPKKESQDYLG). The residue at position 95 (Y95) is a Sulfotyrosine. Phenylalanine amide is present on F101. Residues 102–113 (GRRSAEEYEYSS) constitute a propeptide that is removed on maturation.

Belongs to the gastrin/cholecystokinin family. Expressed by the mandibular venom gland.

It is found in the secreted. Cholecystokinin-22: hypotensive neuropeptide that binds cholecystokinin receptor type A receptor (CCKAR). Functionally, cholecystokinin-8: hypotensive neuropeptide that binds cholecystokinin receptor type A receptor (CCKAR). This chain is Cholecystoxin, found in Varanus varius (Lace monitor lizard).